The following is a 401-amino-acid chain: MGSKVEQQYKLLNAELMDQVQKQRLEIGEYRKRVISLEREIMDIREEHVLQNHRQRMENISIVRSLMLSLNVDSDSLAVRQEPAPAAQINRPSGPRRSSREICKDMRRTCALARTTRPISPRRSSSVTSTVSSTSRRSSAEVQSEVVTTRIPEDRRANKPTPPPRRPAELVFDEDDSDDDFDEAVSPVEETQTEQNEENNRLFSIIEENGSEGESTDSSSSCEAIYCDTTFESSPPNAQVTVTPSGRALREVDTNIPVAVSLSRGKETGKGSWLAISVAVEDSPQEPSIQCPRLAVTRPSQSSGIFPDVNGLTPRRSLFNGIGKMAGSTSTPKSFLVEEMPSIRTRSRTAANKKSENTDMSSSFCNNSARPSRSCRPTSLVEPSLKNKLRNGSKGKAKAKK.

Residues 3–49 adopt a coiled-coil conformation; that stretch reads SKVEQQYKLLNAELMDQVQKQRLEIGEYRKRVISLEREIMDIREEHV. A disordered region spans residues 82-197; it reads EPAPAAQINR…VEETQTEQNE (116 aa). Residues 98–108 are compositionally biased toward basic and acidic residues; that stretch reads SSREICKDMRR. Over residues 114–137 the composition is skewed to low complexity; that stretch reads RTTRPISPRRSSSVTSTVSSTSRR. Phosphoserine; by AurB occurs at positions 124, 125, and 126. Acidic residues predominate over residues 171–183; that stretch reads VFDEDDSDDDFDE. Thr331 carries the phosphothreonine; by PLK1 modification. Residues 338 to 401 are disordered; the sequence is EEMPSIRTRS…GSKGKAKAKK (64 aa). The span at 348–377 shows a compositional bias: polar residues; it reads RTAANKKSENTDMSSSFCNNSARPSRSCRP. The span at 387 to 401 shows a compositional bias: basic residues; sequence NKLRNGSKGKAKAKK.

The protein belongs to the shugoshin family. As to quaternary structure, homodimer. Interacts with Incenp. Post-translationally, phosphorylation by polo-like kinase (PLK) on Thr-331 antagonizes cohesive function. Phosphorylation on Thr-331 at the metaphase anaphase transition leads to its dissociation from centromeres. In contrast, phosphorylation by aurB/ial on either Ser-124, Ser-125 or Ser-126 is required for association with centromeres.

The protein resides in the chromosome. The protein localises to the centromere. Functionally, plays a central role in chromosome cohesion during meiosis and mitosis by preventing premature dissociation of cohesin complex from centromeres after prophase, when most of cohesin complex dissociates from chromosomes arms. May act by protecting or Rad21 from cleavage by Sse/separase. Required during meiosis in both males and females. The sequence is that of Shugoshin (mei-S332) from Drosophila melanogaster (Fruit fly).